The sequence spans 50 residues: YRGGYTGPIPRPPPIGRPPLRLVVCACYRLSVSDARNCCIKFGSCCHLVK.

Intrachain disulfides connect Cys25/Cys38, Cys27/Cys45, and Cys39/Cys46.

As to expression, higher expression in hemocytes and to a lesser extent in heart, testis, gills, intestine, lymphoid organ and hepatopancreas. Traces in eyes and subcuticular epithelium. Not present in the brain.

Its subcellular location is the cytoplasmic granule. In terms of biological role, antibacterial activity against M.luteus and E.coli bacteria. Antifungal activity against N.crassa and F.oxysporum. Presents chitin-binding activity. This is Penaeidin-1 from Penaeus vannamei (Whiteleg shrimp).